Reading from the N-terminus, the 335-residue chain is MLNVVIIGASGYAGAELALLVHKHPELNLKGLYVSAGSQDANKPFSALHPQCLGLVDLPVKPLDEAGMLEAKTGTDLVCLATAHEVSMNLAPQFLDAGIPVFDLSGAFRVQQDGFYDKYYGFTHDQPEWLAKAVYGLAEWNAEQIKKTDLVAVAGCYPTASLLALKPLMEAGLIKADTTPIINAVSGVSGAGRKAAIGTSFCEVSLNPYGVFNHRHQPEISYHLGGKVVFQPHLGNFVRGILATIYVQLADGVTAEQIDAAYQQAYSHSPIVRLSKQWPSIRSVAGTPFCDLHWQMQDGLLIVGSAIDNLLKGASSQALQCINLRFGFAPTTGLM.

The active site involves Cys-156.

This sequence belongs to the NAGSA dehydrogenase family. Type 1 subfamily.

Its subcellular location is the cytoplasm. It carries out the reaction N-acetyl-L-glutamate 5-semialdehyde + phosphate + NADP(+) = N-acetyl-L-glutamyl 5-phosphate + NADPH + H(+). It functions in the pathway amino-acid biosynthesis; L-arginine biosynthesis; N(2)-acetyl-L-ornithine from L-glutamate: step 3/4. Its function is as follows. Catalyzes the NADPH-dependent reduction of N-acetyl-5-glutamyl phosphate to yield N-acetyl-L-glutamate 5-semialdehyde. This is N-acetyl-gamma-glutamyl-phosphate reductase from Tolumonas auensis (strain DSM 9187 / NBRC 110442 / TA 4).